An 832-amino-acid polypeptide reads, in one-letter code: Valine--tRNA ligase (832 aa).

The short motif at 41–51 is the 'HIGH' region element; the sequence is PNVTGKLHLGH. The 'KMSKS' region signature appears at 512-516; the sequence is KMSKS. An ATP-binding site is contributed by K515. Residues 760–831 are a coiled coil; it reads FIEISQEQKQ…QIYLEELKWK (72 aa).

This sequence belongs to the class-I aminoacyl-tRNA synthetase family. ValS type 1 subfamily. Monomer.

It localises to the cytoplasm. The enzyme catalyses tRNA(Val) + L-valine + ATP = L-valyl-tRNA(Val) + AMP + diphosphate. In terms of biological role, catalyzes the attachment of valine to tRNA(Val). As ValRS can inadvertently accommodate and process structurally similar amino acids such as threonine, to avoid such errors, it has a 'posttransfer' editing activity that hydrolyzes mischarged Thr-tRNA(Val) in a tRNA-dependent manner. In Mycoplasmopsis synoviae (strain 53) (Mycoplasma synoviae), this protein is Valine--tRNA ligase.